A 399-amino-acid chain; its full sequence is 1-deoxy-D-xylulose 5-phosphate reductoisomerase (399 aa).

The NADPH site is built by threonine 13, glycine 14, serine 15, isoleucine 16, and asparagine 127. A 1-deoxy-D-xylulose 5-phosphate-binding site is contributed by lysine 128. Residue glutamate 129 participates in NADPH binding. Aspartate 153 lines the Mn(2+) pocket. 4 residues coordinate 1-deoxy-D-xylulose 5-phosphate: serine 154, glutamate 155, serine 187, and histidine 210. Residue glutamate 155 participates in Mn(2+) binding. Glycine 216 contributes to the NADPH binding site. Residues serine 223, asparagine 228, lysine 229, and glutamate 232 each contribute to the 1-deoxy-D-xylulose 5-phosphate site. Mn(2+) is bound at residue glutamate 232.

The protein belongs to the DXR family. Mg(2+) serves as cofactor. Requires Mn(2+) as cofactor.

It carries out the reaction 2-C-methyl-D-erythritol 4-phosphate + NADP(+) = 1-deoxy-D-xylulose 5-phosphate + NADPH + H(+). Its pathway is isoprenoid biosynthesis; isopentenyl diphosphate biosynthesis via DXP pathway; isopentenyl diphosphate from 1-deoxy-D-xylulose 5-phosphate: step 1/6. In terms of biological role, catalyzes the NADPH-dependent rearrangement and reduction of 1-deoxy-D-xylulose-5-phosphate (DXP) to 2-C-methyl-D-erythritol 4-phosphate (MEP). The polypeptide is 1-deoxy-D-xylulose 5-phosphate reductoisomerase (Bordetella pertussis (strain Tohama I / ATCC BAA-589 / NCTC 13251)).